The primary structure comprises 454 residues: Probable tRNA methyltransferase 9B (454 aa).

Ser214 bears the Phosphoserine mark.

Belongs to the methyltransferase superfamily. In terms of tissue distribution, down-regulated in breast, bladder, colorectal, cervix and testicular carcinomas.

Functionally, may modify wobble uridines in specific arginine and glutamic acid tRNAs. Acts as a tumor suppressor by promoting the expression of LIN9. This Homo sapiens (Human) protein is Probable tRNA methyltransferase 9B.